Consider the following 256-residue polypeptide: Probable succinate transporter subunit YjjP (256 aa).

Topologically, residues 1–113 are cytoplasmic; sequence MQTEQQRAVT…KRFSQIQPLR (113 aa). Residues 114–135 traverse the membrane as a helical segment; it reads YPRWLVALMVGLSCACFCKLNN. Over 136-140 the chain is Periplasmic; the sequence is GGWDG. A helical membrane pass occupies residues 141-158; sequence AVITFFASTTAMYIRQLL. Over 159–168 the chain is Cytoplasmic; sequence AQRHLHPQIN. Residues 169-189 form a helical membrane-spanning segment; sequence FCLTAFAATTISGLLLQLPTF. At 190-194 the chain is on the periplasmic side; the sequence is SNTPT. Residues 195 to 215 traverse the membrane as a helical segment; that stretch reads IAMAASVLLLVPGFPLINAVA. The Cytoplasmic portion of the chain corresponds to 216-228; that stretch reads DMFKGHINTGLAR. The helical transmembrane segment at 229–249 threads the bilayer; it reads WAIASLLTLATCVGVVMALTI. Residues 250–256 lie on the Periplasmic side of the membrane; it reads WGLRGWV.

It belongs to the ThrE exporter (TC 2.A.79) family. In terms of assembly, the transporter is composed of YjjB and YjjP.

Its subcellular location is the cell inner membrane. Involved in succinate export with YjjB. Both proteins are required for export. Contributes to succinate production under both aerobic and anaerobic conditions. This Escherichia coli (strain K12) protein is Probable succinate transporter subunit YjjP (yjjP).